The primary structure comprises 87 residues: MANIKSAKKRAVQSEKRRQHNASQRSMMRTFIKKTYAAVATGDKAVAQAAFVEMQKVVDRMASKGLIHANKAANHKSKLAAQIKKLA.

Residues 1-11 (MANIKSAKKRA) show a composition bias toward basic residues. A disordered region spans residues 1–27 (MANIKSAKKRAVQSEKRRQHNASQRSM).

Belongs to the bacterial ribosomal protein bS20 family.

Its function is as follows. Binds directly to 16S ribosomal RNA. This Histophilus somni (strain 129Pt) (Haemophilus somnus) protein is Small ribosomal subunit protein bS20.